Reading from the N-terminus, the 200-residue chain is Large ribosomal subunit protein uL4 (200 aa).

The tract at residues 38–68 (GRQGSKQQKTRSDVRGGGKRPWRQKGTGRAR) is disordered. The segment covering 54 to 65 (GGKRPWRQKGTG) has biased composition (basic residues).

The protein belongs to the universal ribosomal protein uL4 family. As to quaternary structure, part of the 50S ribosomal subunit.

One of the primary rRNA binding proteins, this protein initially binds near the 5'-end of the 23S rRNA. It is important during the early stages of 50S assembly. It makes multiple contacts with different domains of the 23S rRNA in the assembled 50S subunit and ribosome. Functionally, forms part of the polypeptide exit tunnel. The sequence is that of Large ribosomal subunit protein uL4 from Pseudomonas fluorescens (strain SBW25).